A 198-amino-acid polypeptide reads, in one-letter code: NAD(P)H dehydrogenase (quinone) (198 aa).

The 186-residue stretch at 4–189 (ILVLYYSMYG…SIARYQGEYV (186 aa)) folds into the Flavodoxin-like domain. FMN contacts are provided by residues 10–15 (SMYGHI) and 78–80 (TRF). Tyr12 contacts NAD(+). Trp98 lines the substrate pocket. FMN-binding positions include 113–118 (STGTGG) and His133.

This sequence belongs to the WrbA family. FMN is required as a cofactor.

It catalyses the reaction a quinone + NADH + H(+) = a quinol + NAD(+). The enzyme catalyses a quinone + NADPH + H(+) = a quinol + NADP(+). The protein is NAD(P)H dehydrogenase (quinone) of Salmonella typhi.